The following is a 240-amino-acid chain: Phosducin-like protein 2 (240 aa).

The Phosducin domain occupies 54–214; the sequence is QRDKKIDDMS…MLGQAGAVPT (161 aa). Serine 63 and serine 73 each carry phosphoserine. Residues 99 to 240 form a thioredoxin fold region; the sequence is FGSVREISGQ…DLEDKSSDFY (142 aa).

It belongs to the phosducin family.

Its subcellular location is the cytoplasm. Functionally, modulates the activation of caspases during apoptosis. The chain is Phosducin-like protein 2 from Drosophila melanogaster (Fruit fly).